The sequence spans 156 residues: Arginine repressor (156 aa).

Belongs to the ArgR family.

It is found in the cytoplasm. The protein operates within amino-acid biosynthesis; L-arginine biosynthesis [regulation]. In terms of biological role, regulates arginine biosynthesis genes. This Enterobacter sp. (strain 638) protein is Arginine repressor.